We begin with the raw amino-acid sequence, 73 residues long: Excelsatoxin A (73 aa).

The signal sequence occupies residues 1–20; it reads MRFALVAAITIALLVAGSVA. A propeptide spanning residues 21-37 is cleaved from the precursor; the sequence is DESSEDIDNIVIKTPLD. 3 cysteine pairs are disulfide-bonded: cysteine 41–cysteine 58, cysteine 46–cysteine 60, and cysteine 54–cysteine 69.

Belongs to the gympietide family. In terms of tissue distribution, expressed in trichomes, that are stiff epidermal hairs located on the surface of petioles and leaves. Not expressed in other aerial parts.

The protein resides in the secreted. Functionally, neurotoxin certainly responsible for the defensive, persistent, and painful stings of the giant stinging tree. Inhibits inactivation of Nav1.7/SCN9A sodium channel in sensory neurons by directly interacting with TMEM233, a newly described Nav-interacting protein. Has virtually no effect on Nav1.7/SCN9A function in heterologous expression systems and in neurons that do not express TMEM233. Also weakly but significantly affects Nav1.8/SCN10A. Coexpression of TMEM233 with Nav also confers ExTxA sensitivity to Nav1.1-Nav1.6. On the Nav1.7/SCN9A channel, causes a significant hyperpolarizing shift in the voltage dependence of activation. Its effects on Nav currents are irreversible, with no apparent reduction in activity even after repeated wash steps over 30 minutes. Does not show activity on Nav1.9/SCN11A. Does not show insecticidal activities. In vivo, induces nocifensive behavior in mice (licking or biting and shaking or lifting of the affected paw) lasting for approximately 1 hour. This chain is Excelsatoxin A, found in Dendrocnide excelsa (Giant stinging tree).